The following is a 280-amino-acid chain: Dexamethasone-induced Ras-related protein 1 (280 aa).

Cysteine 11 carries the post-translational modification S-nitrosocysteine. A GTP-binding site is contributed by glycine 31–threonine 38. An Effector region motif is present at residues tyrosine 53–histidine 61. Residues aspartate 78 to asparagine 82 and asparagine 145 to aspartate 148 contribute to the GTP site. A Cysteine methyl ester modification is found at cysteine 277. The S-farnesyl cysteine moiety is linked to residue cysteine 277. The propeptide at valine 278–serine 280 is removed in mature form.

The protein belongs to the small GTPase superfamily. RasD family. Forms a ternary complex with CAPON and NOS1. Component of a complex, at least composed of APBB1, RASD1/DEXRAS1 and APP. Interacts with APBB1/FE65. Forms. In terms of processing, S-nitrosylation stimulates guanine-nucleotide exchange activity. Prominently found in brain at both mRNA and protein levels. Moderate expression in testis and lung. Slightly expressed in heart, spleen, skeletal muscle, liver and kidney.

Its subcellular location is the cell membrane. It is found in the cytoplasm. It localises to the perinuclear region. The protein localises to the nucleus. Small GTPase. Negatively regulates the transcription regulation activity of the APBB1/FE65-APP complex via its interaction with APBB1/FE65. This Rattus norvegicus (Rat) protein is Dexamethasone-induced Ras-related protein 1 (Rasd1).